A 401-amino-acid polypeptide reads, in one-letter code: MNEVVIPSVLQDGSVRTPEPRKQNLLDLDREGLERFFADTLGEARYRAHQVMKWIHHRYVTDFDQMTDLGKALRAKLHQHAEVLVPNVVFDKPSADGTHKWLLAMGTDGKNAIETVYIPDKGRGTLCVSSQVGCGLNCSFCSTATQGFNRNLTTAEIIGQVWVAARHLGNVPHQQRRLTNVVMMGMGEPLMNFDNVVRAMSVMRDDLGYGLASKRVTLSTSGLVPMIDRLSTESDVSLAVSLHAANDALRESLVPLNKKYPIAELMESCARYLRGSKKRDSVTFEYTLMKGINDQPEHARQLARLMRQFDNAVQSKDAGKVNLIPFNPFPGTRYERSGETEIRAFQKILLDAQVLTMVRRTRGDDIDAACGQLKGQVMDRTRRQAEFRRTLEGQADRDAAA.

Glu114 functions as the Proton acceptor in the catalytic mechanism. The Radical SAM core domain occupies 120–365 (DKGRGTLCVS…TMVRRTRGDD (246 aa)). A disulfide bond links Cys127 and Cys370. 3 residues coordinate [4Fe-4S] cluster: Cys134, Cys138, and Cys141. S-adenosyl-L-methionine contacts are provided by residues 187 to 188 (GE), Ser219, 241 to 243 (SLH), and Asn327. Cys370 functions as the S-methylcysteine intermediate in the catalytic mechanism.

It belongs to the radical SAM superfamily. RlmN family. [4Fe-4S] cluster serves as cofactor.

Its subcellular location is the cytoplasm. It catalyses the reaction adenosine(2503) in 23S rRNA + 2 reduced [2Fe-2S]-[ferredoxin] + 2 S-adenosyl-L-methionine = 2-methyladenosine(2503) in 23S rRNA + 5'-deoxyadenosine + L-methionine + 2 oxidized [2Fe-2S]-[ferredoxin] + S-adenosyl-L-homocysteine. The enzyme catalyses adenosine(37) in tRNA + 2 reduced [2Fe-2S]-[ferredoxin] + 2 S-adenosyl-L-methionine = 2-methyladenosine(37) in tRNA + 5'-deoxyadenosine + L-methionine + 2 oxidized [2Fe-2S]-[ferredoxin] + S-adenosyl-L-homocysteine. Its function is as follows. Specifically methylates position 2 of adenine 2503 in 23S rRNA and position 2 of adenine 37 in tRNAs. m2A2503 modification seems to play a crucial role in the proofreading step occurring at the peptidyl transferase center and thus would serve to optimize ribosomal fidelity. This chain is Dual-specificity RNA methyltransferase RlmN, found in Xanthomonas axonopodis pv. citri (strain 306).